The sequence spans 365 residues: Protein Tob1 (365 aa).

A Bipartite nuclear localization signal motif is present at residues 22-39 (RRRVNIFGEELERLLKQK). Positions 82–92 (VRGNLPQDLSV) are important for nuclear localization. A compositionally biased stretch (low complexity) spans 144–160 (DPASSVSSSPSPPFGHS). The interval 144-171 (DPASSVSSSPSPPFGHSAAVSPTFMPRS) is disordered. Positions 161–220 (AAVSPTFMPRSTQPLTFTTATFAATKFGSTKMKNSGRSSKVARTSPISLGLNVNVNDLLK) are required for interaction with CPEB3. Thr-204 is subject to Phosphothreonine. Positions 228-236 (MHSLYGLGL) match the Nuclear export signal motif. Positions 233-287 (GLGLGSQQQPQPQPQQPPSQPPPPPPPPQQQQQHQQQQQQQQQQQQQPQQQTSAL) are disordered. Residues 243-261 (QPQPQQPPSQPPPPPPPPQ) are compositionally biased toward pro residues. Positions 262–283 (QQQQHQQQQQQQQQQQQQPQQQ) are enriched in low complexity.

Belongs to the BTG family. In terms of assembly, interacts with ERBB2. Interacts with CNOT7. Interacts with CPEB3 (via C-terminal RNA-binding region); recruits CNOT7 to CPEB3 to form a ternary complex required for mRNA deadenylation and decay. Interacts with CNOT8. Interacts with CPEB4. Phosphorylated on Ser and Thr residues.

It is found in the cytoplasm. It localises to the nucleus. Anti-proliferative protein; the function is mediated by association with deadenylase subunits of the CCR4-NOT complex. Mediates CPEB3-accelerated mRNA deadenylation by binding to CPEB3 and recruiting CNOT7 which leads to target mRNA deadenylation and decay. This Rattus norvegicus (Rat) protein is Protein Tob1 (Tob1).